A 533-amino-acid chain; its full sequence is D-3-phosphoglycerate dehydrogenase (533 aa).

Position 2 is an N-acetylalanine (A2). Position 14 is a phosphoserine (S14). K58 bears the N6-acetyllysine mark. Residues T78, 155-156, D175, T207, 234-236, and D260 contribute to the NAD(+) site; these read RI and CAR. Position 78 is a phosphothreonine (T78). R236 is an active-site residue. E265 is an active-site residue. H283 serves as the catalytic Proton donor. 283–286 provides a ligand contact to NAD(+); that stretch reads HLGA.

It belongs to the D-isomer specific 2-hydroxyacid dehydrogenase family. As to quaternary structure, homotetramer.

It carries out the reaction (2R)-3-phosphoglycerate + NAD(+) = 3-phosphooxypyruvate + NADH + H(+). The enzyme catalyses (R)-2-hydroxyglutarate + NAD(+) = 2-oxoglutarate + NADH + H(+). It catalyses the reaction (S)-malate + NAD(+) = oxaloacetate + NADH + H(+). Its pathway is amino-acid biosynthesis; L-serine biosynthesis; L-serine from 3-phospho-D-glycerate: step 1/3. Functionally, catalyzes the reversible oxidation of 3-phospho-D-glycerate to 3-phosphonooxypyruvate, the first step of the phosphorylated L-serine biosynthesis pathway. Also catalyzes the reversible oxidation of 2-hydroxyglutarate to 2-oxoglutarate and the reversible oxidation of (S)-malate to oxaloacetate. This chain is D-3-phosphoglycerate dehydrogenase (PHGDH), found in Sus scrofa (Pig).